The sequence spans 182 residues: Transcriptional repressor NrdR (182 aa).

The interval 1 to 24 (MRCPYCGGLDTQVRDSRPTEDNTA) is disordered. The segment at 3–34 (CPYCGGLDTQVRDSRPTEDNTAIRRRRICPDC) is a zinc-finger region. Positions 12-24 (QVRDSRPTEDNTA) are enriched in basic and acidic residues. Positions 49–139 (LMVLKRSGRR…VYRNFREAKD (91 aa)) constitute an ATP-cone domain. Residues 146–182 (ELSQPELAQSDDVKAEGGAEGGRDKPKAAGKPPRSAE) form a disordered region. Residues 156–172 (DDVKAEGGAEGGRDKPK) are compositionally biased toward basic and acidic residues.

Belongs to the NrdR family. Requires Zn(2+) as cofactor.

Its function is as follows. Negatively regulates transcription of bacterial ribonucleotide reductase nrd genes and operons by binding to NrdR-boxes. The chain is Transcriptional repressor NrdR from Xanthobacter autotrophicus (strain ATCC BAA-1158 / Py2).